Reading from the N-terminus, the 92-residue chain is Small ribosomal subunit protein uS19c (92 aa).

This sequence belongs to the universal ribosomal protein uS19 family.

The protein localises to the plastid. The protein resides in the chloroplast. Its function is as follows. Protein S19 forms a complex with S13 that binds strongly to the 16S ribosomal RNA. The polypeptide is Small ribosomal subunit protein uS19c (rps19) (Guillardia theta (Cryptophyte)).